The sequence spans 621 residues: uncharacterized protein (621 aa).

It belongs to the chlamydial CPn_0512/CT_425/TC_0708 family.

This is an uncharacterized protein from Chlamydia muridarum (strain MoPn / Nigg).